The sequence spans 341 residues: Anthranilate phosphoribosyltransferase (341 aa).

Residues G82, 85-86 (GD), T90, 92-95 (NIST), 110-118 (KHGGRSVSG), and S122 contribute to the 5-phospho-alpha-D-ribose 1-diphosphate site. G82 provides a ligand contact to anthranilate. S94 is a binding site for Mg(2+). R168 contacts anthranilate. Mg(2+)-binding residues include D227 and E228.

Belongs to the anthranilate phosphoribosyltransferase family. Homodimer. Mg(2+) serves as cofactor.

The catalysed reaction is N-(5-phospho-beta-D-ribosyl)anthranilate + diphosphate = 5-phospho-alpha-D-ribose 1-diphosphate + anthranilate. It functions in the pathway amino-acid biosynthesis; L-tryptophan biosynthesis; L-tryptophan from chorismate: step 2/5. Its function is as follows. Catalyzes the transfer of the phosphoribosyl group of 5-phosphorylribose-1-pyrophosphate (PRPP) to anthranilate to yield N-(5'-phosphoribosyl)-anthranilate (PRA). The chain is Anthranilate phosphoribosyltransferase from Nitrosomonas europaea (strain ATCC 19718 / CIP 103999 / KCTC 2705 / NBRC 14298).